A 296-amino-acid polypeptide reads, in one-letter code: Large ribosomal subunit protein uL18B (296 aa).

The segment at 251–296 is disordered; that stretch reads PVHEKKPKKEVKKKRWNRAKLSLEQKKDRVAQKKASFLRAQEKADS. Over residues 255–268 the composition is skewed to basic residues; the sequence is KKPKKEVKKKRWNR. The span at 271 to 281 shows a compositional bias: basic and acidic residues; sequence LSLEQKKDRVA.

Belongs to the universal ribosomal protein uL18 family. Component of the large ribosomal subunit (LSU). Part of a LSU subcomplex, the 5S RNP which is composed of the 5S RNA, RPL5 and RPL11.

It localises to the cytoplasm. It is found in the nucleus. The protein resides in the nucleolus. Its function is as follows. Component of the ribosome, a large ribonucleoprotein complex responsible for the synthesis of proteins in the cell. The small ribosomal subunit (SSU) binds messenger RNAs (mRNAs) and translates the encoded message by selecting cognate aminoacyl-transfer RNA (tRNA) molecules. The large subunit (LSU) contains the ribosomal catalytic site termed the peptidyl transferase center (PTC), which catalyzes the formation of peptide bonds, thereby polymerizing the amino acids delivered by tRNAs into a polypeptide chain. The nascent polypeptides leave the ribosome through a tunnel in the LSU and interact with protein factors that function in enzymatic processing, targeting, and the membrane insertion of nascent chains at the exit of the ribosomal tunnel. As part of the 5S RNP/5S ribonucleoprotein particle it is an essential component of the LSU, required for its formation and the maturation of rRNAs. It also couples ribosome biogenesis to p53/TP53 activation. As part of the 5S RNP it accumulates in the nucleoplasm and inhibits MDM2, when ribosome biogenesis is perturbed, mediating the stabilization and the activation of TP53. The chain is Large ribosomal subunit protein uL18B (rpl5-b) from Xenopus laevis (African clawed frog).